The chain runs to 68 residues: Large ribosomal subunit protein bL31 (68 aa).

Residues C16, C18, C37, and C40 each coordinate Zn(2+).

Belongs to the bacterial ribosomal protein bL31 family. Type A subfamily. As to quaternary structure, part of the 50S ribosomal subunit. It depends on Zn(2+) as a cofactor.

Functionally, binds the 23S rRNA. This Aquifex aeolicus (strain VF5) protein is Large ribosomal subunit protein bL31.